Here is a 249-residue protein sequence, read N- to C-terminus: MADISNKKVSELTSEEIIQLIANSKKKTIVRVYVSGNLKALDIRDFEGYGKEFEFVGGQDFGVLFGNYEYIKEILRNNSITSFKVEYIAHNSAIPLSDISKFNARIEPGAIIREYVEIGNNAVIMMGAVINLGAIIGEGTMIDMNTVIGARARIGKYCHIGAGSVIAGVVEPPSAQPVIIEDNVVIGANAVILEGVRVGEHSVVAAGAVVVEDVPPYTVVAGVPAKVIKKVDEKTISKTQLIEELRKLR.

It belongs to the transferase hexapeptide repeat family. DapH subfamily.

The enzyme catalyses (S)-2,3,4,5-tetrahydrodipicolinate + acetyl-CoA + H2O = L-2-acetamido-6-oxoheptanedioate + CoA. Its pathway is amino-acid biosynthesis; L-lysine biosynthesis via DAP pathway; LL-2,6-diaminopimelate from (S)-tetrahydrodipicolinate (acetylase route): step 1/3. Catalyzes the transfer of an acetyl group from acetyl-CoA to tetrahydrodipicolinate. In Fervidobacterium nodosum (strain ATCC 35602 / DSM 5306 / Rt17-B1), this protein is 2,3,4,5-tetrahydropyridine-2,6-dicarboxylate N-acetyltransferase.